The primary structure comprises 76 residues: Large ribosomal subunit protein eL20 (76 aa).

This sequence belongs to the eukaryotic ribosomal protein eL20 family. As to quaternary structure, part of the 50S ribosomal subunit. Binds 23S rRNA.

In Methanocaldococcus jannaschii (strain ATCC 43067 / DSM 2661 / JAL-1 / JCM 10045 / NBRC 100440) (Methanococcus jannaschii), this protein is Large ribosomal subunit protein eL20.